Here is a 205-residue protein sequence, read N- to C-terminus: Small ribosomal subunit protein uS4 (205 aa).

The interval 18 to 46 (NIWGRSKSPVNRREYGPGQHGQRRKGKLS) is disordered. The region spanning 94–157 (RRLDAVVYRA…RQMTLVLEAQ (64 aa)) is the S4 RNA-binding domain.

It belongs to the universal ribosomal protein uS4 family. Part of the 30S ribosomal subunit. Contacts protein S5. The interaction surface between S4 and S5 is involved in control of translational fidelity.

Its function is as follows. One of the primary rRNA binding proteins, it binds directly to 16S rRNA where it nucleates assembly of the body of the 30S subunit. In terms of biological role, with S5 and S12 plays an important role in translational accuracy. This chain is Small ribosomal subunit protein uS4, found in Xanthobacter autotrophicus (strain ATCC BAA-1158 / Py2).